A 510-amino-acid polypeptide reads, in one-letter code: D-alanine--D-alanyl carrier protein ligase (510 aa).

157-158 (TS) is an ATP binding site. Residue Asp202 coordinates D-alanine. 297–302 (NTYGPT) contributes to the ATP binding site. Residue Val306 participates in D-alanine binding. Residues Asp389 and Lys498 each coordinate ATP. Lys498 provides a ligand contact to D-alanine.

The protein belongs to the ATP-dependent AMP-binding enzyme family. DltA subfamily.

The protein resides in the cytoplasm. It carries out the reaction holo-[D-alanyl-carrier protein] + D-alanine + ATP = D-alanyl-[D-alanyl-carrier protein] + AMP + diphosphate. It functions in the pathway cell wall biogenesis; lipoteichoic acid biosynthesis. In terms of biological role, catalyzes the first step in the D-alanylation of lipoteichoic acid (LTA), the activation of D-alanine and its transfer onto the D-alanyl carrier protein (Dcp) DltC. In an ATP-dependent two-step reaction, forms a high energy D-alanyl-AMP intermediate, followed by transfer of the D-alanyl residue as a thiol ester to the phosphopantheinyl prosthetic group of the Dcp. D-alanylation of LTA plays an important role in modulating the properties of the cell wall in Gram-positive bacteria, influencing the net charge of the cell wall. In Listeria monocytogenes serotype 4b (strain CLIP80459), this protein is D-alanine--D-alanyl carrier protein ligase.